The primary structure comprises 97 residues: Co-chaperonin GroES (97 aa).

The protein belongs to the GroES chaperonin family. In terms of assembly, heptamer of 7 subunits arranged in a ring. Interacts with the chaperonin GroEL.

Its subcellular location is the cytoplasm. Its function is as follows. Together with the chaperonin GroEL, plays an essential role in assisting protein folding. The GroEL-GroES system forms a nano-cage that allows encapsulation of the non-native substrate proteins and provides a physical environment optimized to promote and accelerate protein folding. GroES binds to the apical surface of the GroEL ring, thereby capping the opening of the GroEL channel. The chain is Co-chaperonin GroES from Sodalis glossinidius (strain morsitans).